We begin with the raw amino-acid sequence, 470 residues long: Uronate isomerase (470 aa).

This sequence belongs to the metallo-dependent hydrolases superfamily. Uronate isomerase family.

The enzyme catalyses D-glucuronate = D-fructuronate. It catalyses the reaction aldehydo-D-galacturonate = keto-D-tagaturonate. Its pathway is carbohydrate metabolism; pentose and glucuronate interconversion. The chain is Uronate isomerase from Salmonella arizonae (strain ATCC BAA-731 / CDC346-86 / RSK2980).